The chain runs to 605 residues: Elongation factor 4 (605 aa).

Positions 4–186 (SSVRNFCIIA…AIVNKVPAPK (183 aa)) constitute a tr-type G domain. GTP-binding positions include 16 to 21 (DHGKST) and 133 to 136 (NKID).

This sequence belongs to the TRAFAC class translation factor GTPase superfamily. Classic translation factor GTPase family. LepA subfamily.

Its subcellular location is the cell membrane. It catalyses the reaction GTP + H2O = GDP + phosphate + H(+). Its function is as follows. Required for accurate and efficient protein synthesis under certain stress conditions. May act as a fidelity factor of the translation reaction, by catalyzing a one-codon backward translocation of tRNAs on improperly translocated ribosomes. Back-translocation proceeds from a post-translocation (POST) complex to a pre-translocation (PRE) complex, thus giving elongation factor G a second chance to translocate the tRNAs correctly. Binds to ribosomes in a GTP-dependent manner. This chain is Elongation factor 4, found in Dehalococcoides mccartyi (strain ATCC BAA-2100 / JCM 16839 / KCTC 5957 / BAV1).